A 1204-amino-acid chain; its full sequence is MKDQQTVIMTECTSLQFVSPFAFEAMQKVDVVCLASLSDPELRLLLPCLVRMALCAPADQSQSWAQDKKLILRLLSGVEAVNSIVALLSVDFHALEQDASKEQQLRHKLGGGSGESILVSQLQHGLTLEFEHSDSPRRLRLVLSELLAIMNKVSESNGEFFFKSSELFESPVYLEEAADVLCILQAELPSLLPIVDVAEALLHVRNGAWFLCLLVANVPDSFNEVCRGLIKNGERQDEESLGGRRRTDALRFLCKMNPSQALKVRGMVVEECHLPGLGVALTLDHTKNEACEDGVSDLVCFVSGLLLGTNAKVRTWFGTFIRNGQQRKRETSSSVLWQMRRQLLLELMGILPTVRSTRIVEEADVDMEPNVSVYSGLKEEHVVKASALLRLYCALMGIAGLKPTEEEAEQLLQLMTSRPPATPAGVRFVSLSFCMLLAFSTLVSTPEQEQLMVVWLSWMIKEEAYFESTSGVSASFGEMLLLVAMYFHSNQLSAIIDLVCSTLGMKIVIKPSSLSRMKTIFTQEIFTEQVVTAHAVRVPVTSNLSANITGFLPIHCIYQLLRSRSFTKHKVSIKDWIYRQLCETSTPLHPQLLPLIDVYINSILTPASKSNPEATNQPVTEQEILNIFQGVIGGDNIRLNQRFSITAQLLVLYYILSYEEALLANTKTLAAMQRKPKSYSSSLMDQIPIKFLIRQAQGLQQELGGLHSALLRLLATNYPHLCIVDDWICEEEITGTDALLRRMLLTNNAKNHSPKQLQEAFSAVPVNNTQVMQIIEHLTLLSASELIPYAEVLTSNMSQLLNSGVPRRILQTVNKLWMVLNTVMPRRLWVMTVNALQPSIKFVRQQKYTQNDLMIDPLIVLRCDQRVHRCPPLMDITLHMLNGYLLASKAYLSAHLKETEQDRPSQNNTIGLVGQTDAPEVTREELKNALLAAQDSAAVQILLEICLPTEEEKANGVNPDSLLRNVQSVITTSAPNKGMEEGEDNLLCNLREVQCLICCLLHQMYIADPNIAKLVHFQGYPCELLPLTVAGIPSMHICLDFIPELIAQPELEKQIFAIQLLSHLCIQYALPKSLSVARLAVNVMGTLLTVLTQAKRYAFFMPTLPSLVSFCRAFPPLYEDIMSLLIQIGQVCASDVATQTRDIDPIITRLQQIKEKPSGWSQICKDSSYKNGSRDTGSMDPDVQLCHCIERTVIEIINMSVSGI.

A helical membrane pass occupies residues 428–444 (FVSLSFCMLLAFSTLVS).

This sequence belongs to the Integrator subunit 2 family. As to quaternary structure, component of the Integrator complex, composed of core subunits INTS1, INTS2, INTS3, INTS4, INTS5, INTS6, INTS7, INTS8, INTS9/RC74, INTS10, INTS11/CPSF3L, INTS12, INTS13, INTS14 and INTS15. The core complex associates with protein phosphatase 2A subunits PPP2CA and PPP2R1A, to form the Integrator-PP2A (INTAC) complex.

It is found in the nucleus. The protein localises to the nucleus membrane. The protein resides in the cytoplasm. Component of the integrator complex, a multiprotein complex that terminates RNA polymerase II (Pol II) transcription in the promoter-proximal region of genes. The integrator complex provides a quality checkpoint during transcription elongation by driving premature transcription termination of transcripts that are unfavorably configured for transcriptional elongation: the complex terminates transcription by (1) catalyzing dephosphorylation of the C-terminal domain (CTD) of Pol II subunit POLR2A/RPB1 and SUPT5H/SPT5, (2) degrading the exiting nascent RNA transcript via endonuclease activity and (3) promoting the release of Pol II from bound DNA. The integrator complex is also involved in terminating the synthesis of non-coding Pol II transcripts, such as enhancer RNAs (eRNAs), small nuclear RNAs (snRNAs), telomerase RNAs and long non-coding RNAs (lncRNAs). Mediates recruitment of cytoplasmic dynein to the nuclear envelope, probably as component of the integrator complex. In Homo sapiens (Human), this protein is Integrator complex subunit 2.